The chain runs to 338 residues: Phosphate acyltransferase (338 aa).

It belongs to the PlsX family. As to quaternary structure, homodimer. Probably interacts with PlsY.

It is found in the cytoplasm. The catalysed reaction is a fatty acyl-[ACP] + phosphate = an acyl phosphate + holo-[ACP]. Its pathway is lipid metabolism; phospholipid metabolism. In terms of biological role, catalyzes the reversible formation of acyl-phosphate (acyl-PO(4)) from acyl-[acyl-carrier-protein] (acyl-ACP). This enzyme utilizes acyl-ACP as fatty acyl donor, but not acyl-CoA. This chain is Phosphate acyltransferase, found in Alcanivorax borkumensis (strain ATCC 700651 / DSM 11573 / NCIMB 13689 / SK2).